A 94-amino-acid polypeptide reads, in one-letter code: Large ribosomal subunit protein bL25 (94 aa).

This sequence belongs to the bacterial ribosomal protein bL25 family. Part of the 50S ribosomal subunit; part of the 5S rRNA/L5/L18/L25 subcomplex. Contacts the 5S rRNA. Binds to the 5S rRNA independently of L5 and L18.

Its function is as follows. This is one of the proteins that binds to the 5S RNA in the ribosome where it forms part of the central protuberance. This chain is Large ribosomal subunit protein bL25, found in Citrobacter koseri (strain ATCC BAA-895 / CDC 4225-83 / SGSC4696).